We begin with the raw amino-acid sequence, 184 residues long: GTP cyclohydrolase 1 (184 aa).

Zn(2+) is bound by residues C75, H78, and C146.

Belongs to the GTP cyclohydrolase I family. In terms of assembly, homomer.

The enzyme catalyses GTP + H2O = 7,8-dihydroneopterin 3'-triphosphate + formate + H(+). It functions in the pathway cofactor biosynthesis; 7,8-dihydroneopterin triphosphate biosynthesis; 7,8-dihydroneopterin triphosphate from GTP: step 1/1. The chain is GTP cyclohydrolase 1 from Teredinibacter turnerae (strain ATCC 39867 / T7901).